A 750-amino-acid polypeptide reads, in one-letter code: MEAAARGNKKLQERVPIRRTAWRLADLAILFLLLALLLHRVLHDSGAPWRRAALACEAWFTFMWLLNVNAKWSPVRFDTFPENLAERIDELPAVDMFVTTADPVLEPPLVTVNTVLSLLALDYPAAGEKLACYVSDDGCSPLTCYALREAARFARTWVPFCRRHGVAVRAPFRYFSSTPEFGPADGKFLEDWTFMKSEYEKLVHRIEDADEPSLLRHGGGEFAEFLDVERGNHPTIIKVLWDNNRSRTGDGFPRLIYVSREKSPNLHHHYKAGAMNALTRVSALMTNAPFMLNLDCDMFVNNPRVVLHAMCLLLGFDDEISCAFVQTPQKFYGALKDDPFGNQLEVSLMKVGRGIAGLQGIFYCGTGCFHRRKVIYGMRTGREGTTGYSSNKELHSKFGSSNNFKESARDVIYGNLSTEPIVDISSCVDVAKEVAACNYEIGTCWGQEVGWVYGSLTEDVLTGQRIHAAGWRSTLMEIEPPAFMGCAPNGGPACLTQLKRWASGFLEILISRNNPILTTTFKSLQFRQCLAYLHSYVWPVRAPFELCYALLGPYCLLSNQSFLPKTSEDGFYIALALFIAYNTYMFMEFIECGQSARACWNNHRMQRITSASAWLLAFLTVILKTLGFSETVFEVTRKDKSTSDGDSNTDEPEPGRFTFDESTVFIPVTALAMLSVIAIAVGAWRVVLVTTEGLPGGPGISEFISCGWLVLCFMPLLRGLVGSGRYGIPWSIKMKACLLVAIFLLFCKRN.

A run of 2 helical transmembrane segments spans residues 27 to 47 and 52 to 72; these read LAIL…DSGA and AALA…NAKW. Active-site residues include Asp137 and Asp459. The next 6 helical transmembrane spans lie at 537-557, 570-590, 608-628, 664-684, 697-717, and 727-747; these read VWPV…YCLL, GFYI…MEFI, ITSA…TLGF, VFIP…VGAW, GPGI…MPLL, and GIPW…LLFC.

Belongs to the glycosyltransferase 2 family. Plant cellulose synthase-like H subfamily.

It localises to the golgi apparatus membrane. Functionally, thought to be a Golgi-localized beta-glycan synthase that polymerize the backbones of noncellulosic polysaccharides (hemicelluloses) of plant cell wall. The protein is Cellulose synthase-like protein H1 (CSLH1) of Oryza sativa subsp. japonica (Rice).